The sequence spans 211 residues: Protoglabretal synthase MOI1 (211 aa).

The next 5 membrane-spanning stretches (helical) occupy residues 16 to 36 (ASLH…TWII), 50 to 70 (LICW…YYVF), 104 to 124 (VLGI…LAAY), 135 to 155 (IFQF…FLTA), and 179 to 199 (IWVI…HAIC). One can recognise an EXPERA domain in the interval 46–188 (IERLLICWWA…IWVIVPMLIA (143 aa)).

The protein belongs to the EBP family. In terms of tissue distribution, expressed in maturing fruits and in juice vesicles.

The protein localises to the membrane. The enzyme catalyses 7,8-epoxymelianol = protoglabretal. It functions in the pathway secondary metabolite biosynthesis; terpenoid biosynthesis. Functionally, isomerase involved in the biosynthesis of glabretanes triterpene natural products such as glabretal, a component with in vitro antiproliferative properties on lymphocytes. Catalyzes the conversion of 7,8-epoxymelianol to protoglabretal via skeletal rearrangements. This Citrus sinensis (Sweet orange) protein is Protoglabretal synthase MOI1.